Consider the following 433-residue polypeptide: Protein RETICULATA-RELATED 1, chloroplastic (433 aa).

A chloroplast-targeting transit peptide spans 1–63 (MSISLKISHI…LSSRNLRNRC (63 aa)). Val-64 carries the N-acetylvaline modification. Positions 93–105 (DLEPELDDGDGGD) are enriched in acidic residues. The interval 93–143 (DLEPELDDGDGGDENGNNDGGGNGGNGDGGGGGGDGEGDDGEDEADKAEEK) is disordered. Positions 110–127 (NDGGGNGGNGDGGGGGGD) are enriched in gly residues. A compositionally biased stretch (acidic residues) spans 128 to 139 (GEGDDGEDEADK). Transmembrane regions (helical) follow at residues 249-269 (LYAA…GLLA) and 323-343 (LLYG…ANLI).

It belongs to the RETICULATA family. As to expression, expressed in root vasculature, distal region of young leaf primordia, leaf bundle sheath cells, hydathodes and pollen grains.

It is found in the plastid. It localises to the chloroplast membrane. Functionally, may play a role in leaf development. This chain is Protein RETICULATA-RELATED 1, chloroplastic, found in Arabidopsis thaliana (Mouse-ear cress).